We begin with the raw amino-acid sequence, 155 residues long: Small ribosomal subunit protein uS7cz/uS7cy (155 aa).

The protein belongs to the universal ribosomal protein uS7 family. In terms of assembly, part of the 30S ribosomal subunit.

Its subcellular location is the plastid. It localises to the chloroplast. In terms of biological role, one of the primary rRNA binding proteins, it binds directly to 16S rRNA where it nucleates assembly of the head domain of the 30S subunit. The protein is Small ribosomal subunit protein uS7cz/uS7cy (rps7-A) of Piper cenocladum (Ant piper).